Reading from the N-terminus, the 328-residue chain is Glyoxylate reductase/hydroxypyruvate reductase (328 aa).

Ser36 is modified (phosphoserine). Residue 83 to 84 coordinates substrate; the sequence is VG. NADP(+)-binding positions include 162–164, 185–188, Ser217, and Ile243; these read GRI and RQPR. 2 residues coordinate substrate: Arg245 and Asp269. Ser272 carries the phosphoserine modification. Residue His293 is the Proton donor of the active site. Substrate is bound at residue 293–296; it reads HIGS. Gly295 is a binding site for NADP(+). Phosphothreonine is present on Thr298.

This sequence belongs to the D-isomer specific 2-hydroxyacid dehydrogenase family. As to quaternary structure, homodimer. As to expression, ubiquitous. Most abundantly expressed in the liver.

It carries out the reaction glycolate + NADP(+) = glyoxylate + NADPH + H(+). The catalysed reaction is (R)-glycerate + NAD(+) = 3-hydroxypyruvate + NADH + H(+). The enzyme catalyses (R)-glycerate + NADP(+) = 3-hydroxypyruvate + NADPH + H(+). In terms of biological role, enzyme with hydroxy-pyruvate reductase, glyoxylate reductase and D-glycerate dehydrogenase enzymatic activities. Reduces hydroxypyruvate to D-glycerate, glyoxylate to glycolate, oxidizes D-glycerate to hydroxypyruvate. This Homo sapiens (Human) protein is Glyoxylate reductase/hydroxypyruvate reductase (GRHPR).